Here is a 202-residue protein sequence, read N- to C-terminus: Holliday junction branch migration complex subunit RuvA (202 aa).

The interval 1–65 (MIAYVEGRLA…EDALELYGFA (65 aa)) is domain I. The interval 66–144 (TWDERQTFIV…VEDLPAAAPL (79 aa)) is domain II. The segment at 145–155 (VTGGAPGGVFR) is flexible linker. Residues 155–202 (RDALAGLANLGYGEEEASHVLKDVLHGEPDLDVGGALRAALRALARGR) form a domain III region.

It belongs to the RuvA family. As to quaternary structure, homotetramer. Forms an RuvA(8)-RuvB(12)-Holliday junction (HJ) complex. HJ DNA is sandwiched between 2 RuvA tetramers; dsDNA enters through RuvA and exits via RuvB. An RuvB hexamer assembles on each DNA strand where it exits the tetramer. Each RuvB hexamer is contacted by two RuvA subunits (via domain III) on 2 adjacent RuvB subunits; this complex drives branch migration. In the full resolvosome a probable DNA-RuvA(4)-RuvB(12)-RuvC(2) complex forms which resolves the HJ.

The protein localises to the cytoplasm. Functionally, the RuvA-RuvB-RuvC complex processes Holliday junction (HJ) DNA during genetic recombination and DNA repair, while the RuvA-RuvB complex plays an important role in the rescue of blocked DNA replication forks via replication fork reversal (RFR). RuvA specifically binds to HJ cruciform DNA, conferring on it an open structure. The RuvB hexamer acts as an ATP-dependent pump, pulling dsDNA into and through the RuvAB complex. HJ branch migration allows RuvC to scan DNA until it finds its consensus sequence, where it cleaves and resolves the cruciform DNA. This is Holliday junction branch migration complex subunit RuvA from Nitratidesulfovibrio vulgaris (strain ATCC 29579 / DSM 644 / CCUG 34227 / NCIMB 8303 / VKM B-1760 / Hildenborough) (Desulfovibrio vulgaris).